The chain runs to 251 residues: 2,3-bisphosphoglycerate-dependent phosphoglycerate mutase (251 aa).

Substrate is bound by residues 11–18 (RHGESDWN), 24–25 (TG), Arg63, 90–93 (ERHY), Lys101, 117–118 (RR), and 184–185 (GN). His12 (tele-phosphohistidine intermediate) is an active-site residue. Catalysis depends on Glu90, which acts as the Proton donor/acceptor.

The protein belongs to the phosphoglycerate mutase family. BPG-dependent PGAM subfamily.

The catalysed reaction is (2R)-2-phosphoglycerate = (2R)-3-phosphoglycerate. Its pathway is carbohydrate degradation; glycolysis; pyruvate from D-glyceraldehyde 3-phosphate: step 3/5. In terms of biological role, catalyzes the interconversion of 2-phosphoglycerate and 3-phosphoglycerate. This Mycobacterium marinum (strain ATCC BAA-535 / M) protein is 2,3-bisphosphoglycerate-dependent phosphoglycerate mutase.